Here is a 195-residue protein sequence, read N- to C-terminus: 3-hydroxyanthranilate 3,4-dioxygenase (195 aa).

Arginine 50 lines the O2 pocket. Fe cation contacts are provided by histidine 54, glutamate 60, and histidine 102. Glutamate 60 is a substrate binding site. Substrate contacts are provided by arginine 106 and glutamate 116. Residues cysteine 131, cysteine 136, cysteine 170, and cysteine 173 each contribute to the a divalent metal cation site.

Belongs to the 3-HAO family. Fe(2+) is required as a cofactor.

The protein localises to the cytoplasm. The catalysed reaction is 3-hydroxyanthranilate + O2 = (2Z,4Z)-2-amino-3-carboxymuconate 6-semialdehyde. It functions in the pathway cofactor biosynthesis; NAD(+) biosynthesis; quinolinate from L-kynurenine: step 3/3. Functionally, catalyzes the oxidative ring opening of 3-hydroxyanthranilate to 2-amino-3-carboxymuconate semialdehyde, which spontaneously cyclizes to quinolinate. This Aspergillus terreus (strain NIH 2624 / FGSC A1156) protein is 3-hydroxyanthranilate 3,4-dioxygenase (bna1).